Consider the following 302-residue polypeptide: Arginase (302 aa).

Positions 103, 126, 128, and 130 each coordinate Mn(2+). Substrate is bound by residues 128–132, 139–141, and aspartate 180; these read HGDLN and SGN. The Mn(2+) site is built by aspartate 229 and aspartate 231. Positions 243 and 274 each coordinate substrate.

The protein belongs to the arginase family. Mn(2+) is required as a cofactor.

The catalysed reaction is L-arginine + H2O = urea + L-ornithine. Its pathway is nitrogen metabolism; urea cycle; L-ornithine and urea from L-arginine: step 1/1. The protein is Arginase (arg) of Staphylococcus aureus (strain COL).